A 111-amino-acid polypeptide reads, in one-letter code: MEVVRGSSLVLLVLLLGALLVSQVESKSCCPNTTGRNIYNACRLTGAPRPTCAKLSGCKIISGSTCPSDYPKFYCTLGCESSQCATNSNGDAEAVRCKTACSDLCQDVDDA.

Residues 1–26 (MEVVRGSSLVLLVLLLGALLVSQVES) form the signal peptide. Cystine bridges form between Cys29/Cys66, Cys30/Cys58, and Cys42/Cys52. Residues 73-111 (FYCTLGCESSQCATNSNGDAEAVRCKTACSDLCQDVDDA) constitute a propeptide, acidic domain.

This sequence belongs to the plant thionin (TC 1.C.44) family.

Its subcellular location is the secreted. Thionins are small plant proteins which are toxic to animal cells. They seem to exert their toxic effect at the level of the cell membrane. Their precise function is not known. The chain is Viscotoxin-A3 (THI2.1) from Viscum album (European mistletoe).